A 279-amino-acid chain; its full sequence is Biotin synthase (279 aa).

Residues 1 to 227 enclose the Radical SAM core domain; the sequence is MKVYLCAISN…NAMIMVAGGR (227 aa). The [4Fe-4S] cluster site is built by cysteine 16, cysteine 20, and cysteine 23. [2Fe-2S] cluster is bound by residues cysteine 60, cysteine 95, and cysteine 153.

It belongs to the radical SAM superfamily. Biotin synthase family. As to quaternary structure, homodimer. It depends on [4Fe-4S] cluster as a cofactor. The cofactor is [2Fe-2S] cluster.

It catalyses the reaction (4R,5S)-dethiobiotin + (sulfur carrier)-SH + 2 reduced [2Fe-2S]-[ferredoxin] + 2 S-adenosyl-L-methionine = (sulfur carrier)-H + biotin + 2 5'-deoxyadenosine + 2 L-methionine + 2 oxidized [2Fe-2S]-[ferredoxin]. It participates in cofactor biosynthesis; biotin biosynthesis; biotin from 7,8-diaminononanoate: step 2/2. Its function is as follows. Catalyzes the conversion of dethiobiotin (DTB) to biotin by the insertion of a sulfur atom into dethiobiotin via a radical-based mechanism. This is Biotin synthase from Nitratiruptor sp. (strain SB155-2).